Here is a 392-residue protein sequence, read N- to C-terminus: MLKPSIICLFLGILAKSSAGQFYFPNEAAQVPNYGRCITPNRERALCIHLEDCKYLYGLLTTTPLRDTDRLYLSRSQCGYTNGKVLICCPDRYRESSSETTPPPKPNVTSNSLLPLPGQCGNILSNRIYGGMKTKIDEFPWMALIEYTKSQGKKGHHCGGSLISTRYVITASHCVNGKALPTDWRLSGVRLGEWDTNTNPDCEVDVRGMKDCAPPHLDVPVERTIPHPDYIPASKNQVNDIALLRLAQQVEYTDFVRPICLPLDVNLRSATFDGITMDVAGWGKTEQLSASNLKLKAAVEGSRMDECQNVYSSQDILLEDTQMCAGGKEGVDSCRGDSGGPLIGLDTNKVNTYYFLAGVVSFGPTPCGLAGWPGVYTLVGKYVDWIQNTIES.

Positions 1–19 (MLKPSIICLFLGILAKSSA) are cleaved as a signal peptide. A propeptide spans 20 to 127 (GQFYFPNEAA…GQCGNILSNR (108 aa)) (activation peptide). Residues 36-89 (RCITPNRERALCIHLEDCKYLYGLLTTTPLRDTDRLYLSRSQCGYTNGKVLICC) form the Clip domain. Disulfide bonds link Cys-37/Cys-88, Cys-47/Cys-78, and Cys-53/Cys-89. Asn-107 carries N-linked (GlcNAc...) asparagine glycosylation. Cystine bridges form between Cys-120–Cys-260, Cys-158–Cys-174, Cys-202–Cys-212, Cys-307–Cys-324, and Cys-334–Cys-367. Positions 128–391 (IYGGMKTKID…YVDWIQNTIE (264 aa)) constitute a Peptidase S1 domain. His-173 (charge relay system) is an active-site residue. Ca(2+) contacts are provided by Glu-193, Asp-195, Thr-198, and Asp-201. The active-site Charge relay system is Asp-240. The Charge relay system role is filled by Ser-338.

This sequence belongs to the peptidase S1 family. CLIP subfamily. In terms of assembly, interacts with Spn27A; the two proteins are covalently linked leading to inhibition of ea catalytic activity. Interacts (via Peptidase domain) with snk (via N-terminal prodomain); leads to proteolytic activation of ea by snk. Sulfation of a vitelline membrane component by pip is required for proteolytic cleavage of ea by snk but not for the interaction of ea with snk. Post-translationally, proteolytically cleaved by snk. Activation peptide and active catalytic domain remain associated by a disulfide bond. Processed ea/easter is present in extremely low amounts in the early embryo as it is rapidly converted into a high molecular mass complex made up of ea covalently bound to the serpin Spn27A. Zymogen activation is also controlled by a negative feedback loop from Dorsal.

The protein resides in the secreted. Its activity is regulated as follows. Activated proteolytically by snk; activation requires both activation of the ndl-gd-snk protease cascade and sulfation of a vitelline membrane component by pip. Inhibited by binding of the serpin Spn27A. In terms of biological role, component of the extracellular signaling pathway that establishes the dorsal-ventral pathway of the embryo. A protease cascade involving ndl, gd, snk and ea results in activation of the spz Toll receptor ligand; acts downstream of ndl, gd and snk and is required for proteolytic processing of spz. Activation of ea requires both activation of the ndl-gd-snk protease cascade and sulfation of a vitelline membrane component by pip. Localized activation of the Toll receptor in the ventral region of the embryo defines cell identities along the dorsal-ventral continuum. In Drosophila melanogaster (Fruit fly), this protein is Serine protease ea.